The sequence spans 181 residues: Large ribosomal subunit protein uL6 (181 aa).

Belongs to the universal ribosomal protein uL6 family. In terms of assembly, part of the 50S ribosomal subunit.

Functionally, this protein binds to the 23S rRNA, and is important in its secondary structure. It is located near the subunit interface in the base of the L7/L12 stalk, and near the tRNA binding site of the peptidyltransferase center. This chain is Large ribosomal subunit protein uL6, found in Ruthia magnifica subsp. Calyptogena magnifica.